The following is a 143-amino-acid chain: Large ribosomal subunit protein uL11 (143 aa).

It belongs to the universal ribosomal protein uL11 family. As to quaternary structure, part of the ribosomal stalk of the 50S ribosomal subunit. Interacts with L10 and the large rRNA to form the base of the stalk. L10 forms an elongated spine to which L12 dimers bind in a sequential fashion forming a multimeric L10(L12)X complex. One or more lysine residues are methylated.

Forms part of the ribosomal stalk which helps the ribosome interact with GTP-bound translation factors. The protein is Large ribosomal subunit protein uL11 of Bordetella parapertussis (strain 12822 / ATCC BAA-587 / NCTC 13253).